The chain runs to 160 residues: S-ribosylhomocysteine lyase (160 aa).

Fe cation is bound by residues histidine 57, histidine 61, and cysteine 127.

The protein belongs to the LuxS family. Homodimer. The cofactor is Fe cation.

The catalysed reaction is S-(5-deoxy-D-ribos-5-yl)-L-homocysteine = (S)-4,5-dihydroxypentane-2,3-dione + L-homocysteine. Its function is as follows. Involved in the synthesis of autoinducer 2 (AI-2) which is secreted by bacteria and is used to communicate both the cell density and the metabolic potential of the environment. The regulation of gene expression in response to changes in cell density is called quorum sensing. Catalyzes the transformation of S-ribosylhomocysteine (RHC) to homocysteine (HC) and 4,5-dihydroxy-2,3-pentadione (DPD). The sequence is that of S-ribosylhomocysteine lyase from Streptococcus mutans serotype c (strain ATCC 700610 / UA159).